The sequence spans 395 residues: Phosphonoacetaldehyde reductase (395 aa).

Fe cation-binding residues include Asp-199, His-268, and His-282.

This sequence belongs to the iron-containing alcohol dehydrogenase family. Fe cation serves as cofactor.

It carries out the reaction 2-hydroxyethylphosphonate + NAD(+) = phosphonoacetaldehyde + NADH + H(+). The protein operates within secondary metabolite biosynthesis; bialaphos biosynthesis. Its function is as follows. Catalyzes the reduction of phosphonoacetaldehyde to 2-hydroxyethylphosphonate, a step in the biosynthesis of phosphinothricin tripeptide. Phosphinothricin tripeptide (PTT), also known as bialaphos (BA), is a natural-product antibiotic and potent herbicide. Can use both NAD and NADP but the preferred substrate is NAD. This is Phosphonoacetaldehyde reductase (phpC) from Streptomyces viridochromogenes (strain DSM 40736 / JCM 4977 / BCRC 1201 / Tue 494).